The primary structure comprises 213 residues: Thiamine-phosphate synthase (213 aa).

4-amino-2-methyl-5-(diphosphooxymethyl)pyrimidine is bound by residues 41-45 and asparagine 73; that span reads QFRVK. 2 residues coordinate Mg(2+): aspartate 74 and aspartate 93. Threonine 112 is a 4-amino-2-methyl-5-(diphosphooxymethyl)pyrimidine binding site. 139 to 141 lines the 2-[(2R,5Z)-2-carboxy-4-methylthiazol-5(2H)-ylidene]ethyl phosphate pocket; sequence SAT. 4-amino-2-methyl-5-(diphosphooxymethyl)pyrimidine is bound at residue lysine 142. Glycine 171 lines the 2-[(2R,5Z)-2-carboxy-4-methylthiazol-5(2H)-ylidene]ethyl phosphate pocket.

It belongs to the thiamine-phosphate synthase family. Mg(2+) serves as cofactor.

It catalyses the reaction 2-[(2R,5Z)-2-carboxy-4-methylthiazol-5(2H)-ylidene]ethyl phosphate + 4-amino-2-methyl-5-(diphosphooxymethyl)pyrimidine + 2 H(+) = thiamine phosphate + CO2 + diphosphate. It carries out the reaction 2-(2-carboxy-4-methylthiazol-5-yl)ethyl phosphate + 4-amino-2-methyl-5-(diphosphooxymethyl)pyrimidine + 2 H(+) = thiamine phosphate + CO2 + diphosphate. The catalysed reaction is 4-methyl-5-(2-phosphooxyethyl)-thiazole + 4-amino-2-methyl-5-(diphosphooxymethyl)pyrimidine + H(+) = thiamine phosphate + diphosphate. The protein operates within cofactor biosynthesis; thiamine diphosphate biosynthesis; thiamine phosphate from 4-amino-2-methyl-5-diphosphomethylpyrimidine and 4-methyl-5-(2-phosphoethyl)-thiazole: step 1/1. In terms of biological role, condenses 4-methyl-5-(beta-hydroxyethyl)thiazole monophosphate (THZ-P) and 2-methyl-4-amino-5-hydroxymethyl pyrimidine pyrophosphate (HMP-PP) to form thiamine monophosphate (TMP). This Erythrobacter litoralis (strain HTCC2594) protein is Thiamine-phosphate synthase.